A 402-amino-acid polypeptide reads, in one-letter code: Choline dehydrogenase (402 aa).

It belongs to the iron-containing alcohol dehydrogenase family.

It catalyses the reaction choline + NAD(+) = betaine aldehyde + NADH + H(+). It participates in amine and polyamine biosynthesis; betaine biosynthesis via choline pathway; betaine aldehyde from choline (dehydrogenase route): step 1/1. Involved in the biosynthesis of the osmoprotectant glycine betaine from choline. This Bacillus subtilis (strain 168) protein is Choline dehydrogenase.